The sequence spans 331 residues: D-aspartate oxidase 2 (331 aa).

The FAD site is built by aspartate 35, lysine 36, serine 43, and glycine 307.

It belongs to the DAMOX/DASOX family. FAD serves as cofactor.

The protein localises to the cytoplasm. It carries out the reaction D-aspartate + O2 + H2O = oxaloacetate + H2O2 + NH4(+). The enzyme catalyses D-glutamate + O2 + H2O = H2O2 + 2-oxoglutarate + NH4(+). Functionally, selectively catalyzes the oxidative deamination of acidic amino acids. May play a role in the egg-laying events and early development of the worm, in addition to quality control of the germ cells. The sequence is that of D-aspartate oxidase 2 from Caenorhabditis briggsae.